Consider the following 730-residue polypeptide: MSDRFELYLTCPKGLESLLAEEAKGLGLDEVREHTSAIRGAADMETAYRLCVWSRLANRVLLVLKRFSMKNADDLYDGVHAVDWADHLAADGTLAVEFSGHGSGIDNTHFGALKVKDAIVDKLRNREGLRPSVEKIDPDVRVHLRLDRGEAILSLDLSGHSLHQRGYRLQQGAAPLKENLAAAVLIRAGWPRIAAEGGALADPMCGVGTFLVEAAMIAADIAPNLKRERWGFSAWLGHVPALWRKVHDEAQARAQAGLAKPPLWIRGYEADPRLIQPGRNNVERAGLGDWVKIYQGEVSTFEPRPDQNQKGLVISNPPYGERLGDEASLLYLYQNLGERLRQACMGWEAAVFTGAPQLGKRMGIRSHKQYAFWNGALPCKLLLFKVQPDQFVTGERREAQPEGTEARQQVPQASEPARLSEGAQMFANRLQKNLKQLGKWARREQIDCYRLYDADMPEYALAVDLYQDWVHVQEYAAPRSVDPDKAQARLLDALAAIPQALGISPQRVVLKRRERQSGTRQYERQATEGRFQEVNEGGVKLLVNLTDYLDTGLFLDHRPMRMRIQREAAGKRFLNLFCYTATATVHAAKGGARSTTSVDLSKTYLDWARRNLALNGYSERNRLEQSDVMTWLEGNRDSYDLIFIDPPTFSNSKRMEGVFDVQRDHVQLLDLAMARLAPGGVLYFSNNFRKFQLDEHLMARYVVEEISAQTLDPDFARNNRIHRAWRLQLR.

Residues 46–157 (TAYRLCVWSR…RGEAILSLDL (112 aa)) form the THUMP domain. The disordered stretch occupies residues 394-418 (GERREAQPEGTEARQQVPQASEPAR).

The protein belongs to the methyltransferase superfamily. RlmKL family.

It is found in the cytoplasm. It catalyses the reaction guanosine(2445) in 23S rRNA + S-adenosyl-L-methionine = N(2)-methylguanosine(2445) in 23S rRNA + S-adenosyl-L-homocysteine + H(+). It carries out the reaction guanosine(2069) in 23S rRNA + S-adenosyl-L-methionine = N(2)-methylguanosine(2069) in 23S rRNA + S-adenosyl-L-homocysteine + H(+). Specifically methylates the guanine in position 2445 (m2G2445) and the guanine in position 2069 (m7G2069) of 23S rRNA. In Pseudomonas putida (strain ATCC 47054 / DSM 6125 / CFBP 8728 / NCIMB 11950 / KT2440), this protein is Ribosomal RNA large subunit methyltransferase K/L.